Consider the following 128-residue polypeptide: Protein ripply2 (128 aa).

Positions Met1 to Pro63 are disordered. Positions Gly9–Gly22 are enriched in low complexity. Residues Trp37–Trp40 carry the WRPW motif motif. The interval His77–Tyr112 is ripply homology domain.

Belongs to the ripply family.

The protein localises to the nucleus. Its function is as follows. Plays a role in somitogenesis. Required for somite segregation and establishment of rostrocaudal polarity in somites. The chain is Protein ripply2 (RIPPLY2) from Homo sapiens (Human).